The following is a 232-amino-acid chain: 2,3,4,5-tetrahydropyridine-2,6-dicarboxylate N-acetyltransferase (232 aa).

It belongs to the transferase hexapeptide repeat family. DapH subfamily.

The enzyme catalyses (S)-2,3,4,5-tetrahydrodipicolinate + acetyl-CoA + H2O = L-2-acetamido-6-oxoheptanedioate + CoA. It participates in amino-acid biosynthesis; L-lysine biosynthesis via DAP pathway; LL-2,6-diaminopimelate from (S)-tetrahydrodipicolinate (acetylase route): step 1/3. In terms of biological role, catalyzes the transfer of an acetyl group from acetyl-CoA to tetrahydrodipicolinate. The chain is 2,3,4,5-tetrahydropyridine-2,6-dicarboxylate N-acetyltransferase from Streptococcus pneumoniae serotype 4 (strain ATCC BAA-334 / TIGR4).